The primary structure comprises 135 residues: Hemoglobin subunit alpha (135 aa).

Residues 1 to 135 (AAVVALWGKI…VALALAERYK (135 aa)) form the Globin domain. Histidine 52 is a binding site for O2. Residue histidine 81 coordinates heme b.

This sequence belongs to the globin family. As to quaternary structure, hb1 is a heterotetramer of two alpha chains and two beta-1 chains. Hb2 is a heterotetramer of two alpha chains and two beta-2 chains. In terms of processing, the N-terminus is blocked. In terms of tissue distribution, red blood cells.

Involved in oxygen transport from gills to the various peripheral tissues. The protein is Hemoglobin subunit alpha of Dissostichus eleginoides (Patagonian toothfish).